The chain runs to 508 residues: Maturase K (508 aa).

Belongs to the intron maturase 2 family. MatK subfamily.

The protein localises to the plastid. It is found in the chloroplast. In terms of biological role, usually encoded in the trnK tRNA gene intron. Probably assists in splicing its own and other chloroplast group II introns. This Pelargonium hortorum (Common geranium) protein is Maturase K.